A 396-amino-acid polypeptide reads, in one-letter code: Septu protein PtuA (396 aa).

In terms of biological role, component of antiviral defense system Septu type I, composed of PtuA and PtuB. Expression of Septu type I in B.subtilis (strain BEST7003) confers resistance to phages SBSphiC and SBSphiJ. May be an ATPase. This Bacillus thuringiensis protein is Septu protein PtuA.